A 593-amino-acid polypeptide reads, in one-letter code: Insulin-like growth factor 2 mRNA-binding protein 3-B (593 aa).

2 consecutive RRM domains span residues 2–75 (NKLY…HSVP) and 81–156 (RKLQ…YIPD). A disordered region spans residues 159 to 208 (ATPQSPSQQLQQPQQQHPQGRRGFGQRGPARQGSPGAAARPKPQSEVPLR). Positions 161 to 176 (PQSPSQQLQQPQQQHP) are enriched in low complexity. KH domains lie at 204–269 (EVPL…CKII) and 285–352 (EIPL…EEEV). A compositionally biased stretch (low complexity) spans 390-402 (SGMPPPSAGVSSP). Residues 390–412 (SGMPPPSAGVSSPTTSASYPPFG) form a disordered region. 2 consecutive KH domains span residues 417-482 (SETV…QGRI) and 499-565 (KLEA…QRKI). The disordered stretch occupies residues 571–593 (QVRRQQQQQQKTAQSGQPQPRRK).

This sequence belongs to the RRM IMP/VICKZ family. Homodimer and multimer. Associates with microtubules. Interaction with a translocation machinery protein TRAPA of the endoplasmic reticulum. Component of a mRNP complex, at least composed of DAZAP1, IGF2BP3, STAU and VgRBP60. The mRNP complex with DAZAP1, IGF2BP3, STAU and VgRBP60 is only found in the cytoplasm. Interacts with a hnRNP 1 related RNA transport protein VgRBP60 both in the nucleus (in an RNA-independent manner) and the cytoplasm (in an RNA-dependent manner). Found in a B3 activator complex. As to expression, expressed in oocytes, kidney and pancreas (at protein level). Expressed in oocytes, kidney and pancreas.

The protein localises to the nucleus. It localises to the cytoplasm. It is found in the endoplasmic reticulum. In terms of biological role, RNA-binding protein that acts as a regulator of mRNA transport and localization. Binds to the RNA sequence motif 5'-UUCAC-3'. Preferentially binds to N6-methyladenosine (m6A)-containing mRNAs and increases their stability. Mediates the specific association of Vg1 RNA to microtubules. May regulate mRNA translation. Binds specifically to the vegetal localization elements (VLE or VgLE) in the 3'-UTR of Vg1 and VegT mRNAs. Binds to the Vg1 and VegT mRNAs in both the nucleus and the cytoplasm. May regulate mRNA translation. Acts as a transcription regulator. Binds to the 5'-[TA]GGTTACT-3' motif within element 3 of the TFIIIA gene promoter. The polypeptide is Insulin-like growth factor 2 mRNA-binding protein 3-B (igf2bp3-b) (Xenopus laevis (African clawed frog)).